The primary structure comprises 557 residues: 2-succinyl-5-enolpyruvyl-6-hydroxy-3-cyclohexene-1-carboxylate synthase (557 aa).

It belongs to the TPP enzyme family. MenD subfamily. Homodimer. It depends on Mg(2+) as a cofactor. Requires Mn(2+) as cofactor. Thiamine diphosphate serves as cofactor.

The catalysed reaction is isochorismate + 2-oxoglutarate + H(+) = 5-enolpyruvoyl-6-hydroxy-2-succinyl-cyclohex-3-ene-1-carboxylate + CO2. It participates in quinol/quinone metabolism; 1,4-dihydroxy-2-naphthoate biosynthesis; 1,4-dihydroxy-2-naphthoate from chorismate: step 2/7. The protein operates within quinol/quinone metabolism; menaquinone biosynthesis. Catalyzes the thiamine diphosphate-dependent decarboxylation of 2-oxoglutarate and the subsequent addition of the resulting succinic semialdehyde-thiamine pyrophosphate anion to isochorismate to yield 2-succinyl-5-enolpyruvyl-6-hydroxy-3-cyclohexene-1-carboxylate (SEPHCHC). The sequence is that of 2-succinyl-5-enolpyruvyl-6-hydroxy-3-cyclohexene-1-carboxylate synthase from Phocaeicola vulgatus (strain ATCC 8482 / DSM 1447 / JCM 5826 / CCUG 4940 / NBRC 14291 / NCTC 11154) (Bacteroides vulgatus).